The following is a 197-amino-acid chain: MKPFTVHKGKVAGIDRANIDTDQIIPKQFLKRIERTGFGKFLFYDWRYIDGEKPNPDFELNRPENEGATILVANENFGCGSSREHAPWALQDYGFQAIIAPSFADIFYNNCLKNGLLPIRLAKQDVEYLLRESTKADYELTISLEDQRVYDDSGFERTFDIDPYRKQLLLKGWDEIDLTFVYEPYIAEYEKKHCPMS.

The protein belongs to the LeuD family. LeuD type 1 subfamily. Heterodimer of LeuC and LeuD.

It catalyses the reaction (2R,3S)-3-isopropylmalate = (2S)-2-isopropylmalate. Its pathway is amino-acid biosynthesis; L-leucine biosynthesis; L-leucine from 3-methyl-2-oxobutanoate: step 2/4. Catalyzes the isomerization between 2-isopropylmalate and 3-isopropylmalate, via the formation of 2-isopropylmaleate. The sequence is that of 3-isopropylmalate dehydratase small subunit from Geobacillus sp. (strain WCH70).